A 191-amino-acid chain; its full sequence is Outer membrane lipoprotein DolP (191 aa).

The signal sequence occupies residues 1–18; sequence MKALSPIAVLISALLLQG. A lipid anchor (N-palmitoyl cysteine) is attached at Cys19. A lipid anchor (S-diacylglycerol cysteine) is attached at Cys19. 2 BON domains span residues 46–115 and 124–191; these read DDGT…RQGQ and NDTW…TFIK.

The protein belongs to the lipoprotein DolP family.

It is found in the cell outer membrane. Plays an important role in maintaining outer membrane integrity. The polypeptide is Outer membrane lipoprotein DolP (Escherichia coli O157:H7).